Reading from the N-terminus, the 342-residue chain is 4-hydroxy-2-oxovalerate aldolase (342 aa).

The region spanning 7-259 is the Pyruvate carboxyltransferase domain; that stretch reads ILVHDMSLRD…CTGVDLGRIQ (253 aa). 15–16 provides a ligand contact to substrate; it reads RD. Aspartate 16 is a Mn(2+) binding site. Catalysis depends on histidine 19, which acts as the Proton acceptor. Substrate contacts are provided by serine 169 and histidine 198. Positions 198 and 200 each coordinate Mn(2+). Tyrosine 289 contributes to the substrate binding site.

It belongs to the 4-hydroxy-2-oxovalerate aldolase family.

The enzyme catalyses (S)-4-hydroxy-2-oxopentanoate = acetaldehyde + pyruvate. The protein is 4-hydroxy-2-oxovalerate aldolase of Alkalilimnicola ehrlichii (strain ATCC BAA-1101 / DSM 17681 / MLHE-1).